Here is a 229-residue protein sequence, read N- to C-terminus: Ribosome maturation factor RimM (229 aa).

The 82-residue stretch at 148–229 folds into the PRC barrel domain; it reads ADEFYWVDLI…RVVVDWEADY (82 aa).

Belongs to the RimM family. Binds ribosomal protein uS19.

The protein resides in the cytoplasm. Functionally, an accessory protein needed during the final step in the assembly of 30S ribosomal subunit, possibly for assembly of the head region. Essential for efficient processing of 16S rRNA. May be needed both before and after RbfA during the maturation of 16S rRNA. It has affinity for free ribosomal 30S subunits but not for 70S ribosomes. The polypeptide is Ribosome maturation factor RimM (Burkholderia pseudomallei (strain 1710b)).